The following is an 863-amino-acid chain: DNA gyrase subunit A (863 aa).

Residues 37-500 enclose the Topo IIA-type catalytic domain; it reads LPDARDGLKP…DYDDIDIEDL (464 aa). Tyr-125 serves as the catalytic O-(5'-phospho-DNA)-tyrosine intermediate. Positions 527 to 533 match the GyrA-box motif; sequence QKRGGKG.

This sequence belongs to the type II topoisomerase GyrA/ParC subunit family. Heterotetramer, composed of two GyrA and two GyrB chains. In the heterotetramer, GyrA contains the active site tyrosine that forms a transient covalent intermediate with DNA, while GyrB binds cofactors and catalyzes ATP hydrolysis.

It is found in the cytoplasm. It catalyses the reaction ATP-dependent breakage, passage and rejoining of double-stranded DNA.. A type II topoisomerase that negatively supercoils closed circular double-stranded (ds) DNA in an ATP-dependent manner to modulate DNA topology and maintain chromosomes in an underwound state. Negative supercoiling favors strand separation, and DNA replication, transcription, recombination and repair, all of which involve strand separation. Also able to catalyze the interconversion of other topological isomers of dsDNA rings, including catenanes and knotted rings. Type II topoisomerases break and join 2 DNA strands simultaneously in an ATP-dependent manner. The polypeptide is DNA gyrase subunit A (Campylobacter jejuni subsp. jejuni serotype O:2 (strain ATCC 700819 / NCTC 11168)).